Reading from the N-terminus, the 140-residue chain is Putative pre-16S rRNA nuclease (140 aa).

The protein belongs to the YqgF nuclease family.

Its subcellular location is the cytoplasm. In terms of biological role, could be a nuclease involved in processing of the 5'-end of pre-16S rRNA. This Pasteurella multocida (strain Pm70) protein is Putative pre-16S rRNA nuclease.